Consider the following 447-residue polypeptide: Phosphoglucosamine mutase (447 aa).

Residue Ser100 is the Phosphoserine intermediate of the active site. Mg(2+)-binding residues include Ser100, Asp239, Asp241, and Asp243. The residue at position 100 (Ser100) is a Phosphoserine.

It belongs to the phosphohexose mutase family. The cofactor is Mg(2+). In terms of processing, activated by phosphorylation.

It catalyses the reaction alpha-D-glucosamine 1-phosphate = D-glucosamine 6-phosphate. Its function is as follows. Catalyzes the conversion of glucosamine-6-phosphate to glucosamine-1-phosphate. The sequence is that of Phosphoglucosamine mutase from Thermoanaerobacter sp. (strain X514).